A 365-amino-acid chain; its full sequence is uncharacterized protein (365 aa).

Residue 29 to 36 (GPLNSGKS) participates in ATP binding.

This sequence belongs to the archaeal ATPase family.

This is an uncharacterized protein from Methanocaldococcus jannaschii (strain ATCC 43067 / DSM 2661 / JAL-1 / JCM 10045 / NBRC 100440) (Methanococcus jannaschii).